Here is a 1336-residue protein sequence, read N- to C-terminus: Zinc finger protein 335 (1336 aa).

2 disordered regions span residues 1–108 and 199–222; these read MEEN…LVHS and PTST…LAQP. Low complexity-rich tracts occupy residues 31–45 and 54–65; these read TSEA…AATA and SGVGQSSDSGSR. The C2H2-type 1 zinc finger occupies 247–270; the sequence is FKCKMCQYRSSTKATLLRHMRERH. Disordered regions lie at residues 282–398 and 415–442; these read AGKR…PSSS and VSQS…GRPS. The span at 300 to 331 shows a compositional bias: acidic residues; it reads EEGPEEEEEDDDIVDAGAIDDLEEDSDYNPAE. A compositionally biased stretch (low complexity) spans 339-349; that stretch reads LRLQRPTPSTL. The segment covering 350–361 has biased composition (basic residues); it reads RPRRRPGRPRKL. The span at 362–373 shows a compositional bias: basic and acidic residues; it reads PRLETSDLHDGI. Residues 378 to 387 show a composition bias toward polar residues; sequence VSSQSTQSPP. C2H2-type zinc fingers lie at residues 465–487, 495–517, 523–545, 562–584, 590–612, 621–643, 649–672, and 678–701; these read YLCR…VNSH, FKCL…MFNH, YKCD…AAVH, FPCP…MKTH, HMCD…LLTH, FKCE…QLSH, FKCS…AVKH, and FACE…RCRH. Disordered stretches follow at residues 732–766 and 961–1013; these read LKQQ…TPPL and LQCG…AAAS. Residues 752-766 show a composition bias toward pro residues; it reads PQEPAPFQPPETPPL. S975 and S1006 each carry phosphoserine. C2H2-type zinc fingers lie at residues 1018-1040, 1046-1068, 1074-1096, and 1102-1125; these read FSCK…KRAH, FKCP…MAQH, HQCN…MLTH, and FSCH…QRLH. K1021 participates in a covalent cross-link: Glycyl lysine isopeptide (Lys-Gly) (interchain with G-Cter in SUMO2). S1148 is subject to Phosphoserine.

Belongs to the krueppel C2H2-type zinc-finger protein family. Interacts with NCOA6; may enhance ligand-dependent transcriptional activation by nuclear hormone receptors. Interacts with CNOT6. Interacts with CNOT9; the interaction is direct. Component of a nuclear receptor-mediated transcription complex composed of at least ZNF335, CCAR2 and EMSY; the complex stimulates the transcription of nuclear receptor target genes such as SOX9 and HOXA1. Within the complex interacts with EMSY and interacts (via C-terminus) with CCAR2. Interacts with members of histone H3'Lys4'(H3K4) methyltransferase complexes ASH2L, CXXC1, KMT2A/MLL1, RBBP5, SETD1A and WDR5. Component of a histone methylation complex composed of at least ZNF335, RBBP5, ASH2L and WDR5; the complex may have histone H3-specific methyltransferase activity, however does not have specificity for 'Lys-4' of histone H3. Interacts with RBBP5 and WDR5. Interacts with ASHL2. Components of this complex may associate with components of the ZNF335-CCAR2-EMSY nuclear receptor-mediated transcription complex to form a complex at least composed of ZNF335, HCFC1, CCAR2, EMSY, MKI67, RBBP5, ASH2L and WDR5. Within this complex also interacts with HCFC1 and MKI67.

The protein localises to the nucleus. Its function is as follows. Component or associated component of some histone methyltransferase complexes may regulate transcription through recruitment of those complexes on gene promoters. Enhances ligand-dependent transcriptional activation by nuclear hormone receptors. Plays an important role in neural progenitor cell proliferation and self-renewal through the regulation of specific genes involved brain development, including REST. Also controls the expression of genes involved in somatic development and regulates, for instance, lymphoblast proliferation. The protein is Zinc finger protein 335 (Znf335) of Rattus norvegicus (Rat).